Here is a 37-residue protein sequence, read N- to C-terminus: Large ribosomal subunit protein bL36 (37 aa).

Belongs to the bacterial ribosomal protein bL36 family.

In Tropheryma whipplei (strain Twist) (Whipple's bacillus), this protein is Large ribosomal subunit protein bL36.